A 913-amino-acid polypeptide reads, in one-letter code: Calcium-activated chloride channel regulator 1 (913 aa).

Positions 1–21 (MGSFKSSVFILVLHLLEGALS) are cleaved as a signal peptide. The tract at residues 46–199 (DETLIQQIKD…DIAGKNVVNH (154 aa)) is metalloprotease domain. H156 provides a ligand contact to Zn(2+). E157 is an active-site residue. H160 and N167 together coordinate Zn(2+). One can recognise a VWFA domain in the interval 306–475 (IVCLVLDKSG…NGLIDAFGAL (170 aa)). N503, N514, N770, N804, N810, N836, and N885 each carry an N-linked (GlcNAc...) asparagine glycan.

It belongs to the CLCR family. In terms of processing, glycosylated. Post-translationally, the translation product is autoproteolytically cleaved by the metalloprotease domain in the endoplasmic reticulum into a N-terminal and a C-terminal products that remain physically associated with each other. The cleavage is necessary for calcium-activated chloride channel (CaCC) activation activity. In terms of tissue distribution, expressed in mucin-producing cells in the respiratory and intestinal tracts, cutaneous sweat glands, and renal mucous glands (at protein level). Strong overexpression in the airways of horses with recurrent airway obstruction (at protein level).

It is found in the secreted. It localises to the extracellular space. May be involved in mediating calcium-activated chloride conductance. May play critical roles in goblet cell metaplasia, mucus hypersecretion, cystic fibrosis and AHR. May be involved in the regulation of mucus production and/or secretion by goblet cells. Involved in the regulation of tissue inflammation in the innate immune response. May play a role as a tumor suppressor. Induces MUC5AC. The chain is Calcium-activated chloride channel regulator 1 (CLCA1) from Equus caballus (Horse).